We begin with the raw amino-acid sequence, 356 residues long: Histidinol-phosphate aminotransferase 1 (356 aa).

Position 210 is an N6-(pyridoxal phosphate)lysine (Lys-210).

The protein belongs to the class-II pyridoxal-phosphate-dependent aminotransferase family. Histidinol-phosphate aminotransferase subfamily. As to quaternary structure, homodimer. The cofactor is pyridoxal 5'-phosphate.

It catalyses the reaction L-histidinol phosphate + 2-oxoglutarate = 3-(imidazol-4-yl)-2-oxopropyl phosphate + L-glutamate. It participates in amino-acid biosynthesis; L-histidine biosynthesis; L-histidine from 5-phospho-alpha-D-ribose 1-diphosphate: step 7/9. The sequence is that of Histidinol-phosphate aminotransferase 1 from Hydrogenovibrio crunogenus (strain DSM 25203 / XCL-2) (Thiomicrospira crunogena).